Here is a 295-residue protein sequence, read N- to C-terminus: HTH-type transcriptional regulator TrpI (295 aa).

The HTH lysR-type domain occupies 6–63 (PSLNALRAFEAAARLHSISLAAEELHVTHGAVSRQVRLLEDDLGVALFGKDGRGVKLT). The segment at residues 23–42 (ISLAAEELHVTHGAVSRQVR) is a DNA-binding region (H-T-H motif).

The protein belongs to the LysR transcriptional regulatory family. Homotetramer.

Its function is as follows. Activates the expression of the trpBA genes, which encode the two tryptophan synthase subunits, and represses initiation at its own promoter. Acts by binding to two adjacent sites in the intergenic region. In the absence of the inducer indoleglycerol phosphate (InGP), TrpI binds to site I. In the presence of InGP, TrpI binds to site I and site II. Binding to site II is site I dependent. InGP strongly stimulates binding to site II and is required for maximal activation of trpBA. This chain is HTH-type transcriptional regulator TrpI, found in Pseudomonas aeruginosa (strain ATCC 15692 / DSM 22644 / CIP 104116 / JCM 14847 / LMG 12228 / 1C / PRS 101 / PAO1).